The chain runs to 263 residues: Oxidoreductase UcpA (263 aa).

NAD(+) is bound at residue 10 to 32; the sequence is LITGALQGIGEGIARTFARHGAN. Ser-141 is a binding site for substrate. The Proton acceptor role is filled by Tyr-155.

The protein belongs to the short-chain dehydrogenases/reductases (SDR) family.

In Escherichia coli (strain K12), this protein is Oxidoreductase UcpA (ucpA).